Consider the following 309-residue polypeptide: Dihydroorotate dehydrogenase B (NAD(+)), catalytic subunit (309 aa).

Residues S21 and 45–46 (KA) contribute to the FMN site. Residues K45 and 69–73 (NAIGL) each bind substrate. The FMN site is built by N99 and N127. Residue N127 coordinates substrate. C130 acts as the Nucleophile in catalysis. 2 residues coordinate FMN: K165 and I191. A substrate-binding site is contributed by 192 to 193 (NT). FMN-binding positions include G217, 243–244 (GG), and 265–266 (GT).

This sequence belongs to the dihydroorotate dehydrogenase family. Type 1 subfamily. Heterotetramer of 2 PyrK and 2 PyrD type B subunits. FMN is required as a cofactor.

Its subcellular location is the cytoplasm. It carries out the reaction (S)-dihydroorotate + NAD(+) = orotate + NADH + H(+). It functions in the pathway pyrimidine metabolism; UMP biosynthesis via de novo pathway; orotate from (S)-dihydroorotate (NAD(+) route): step 1/1. Its function is as follows. Catalyzes the conversion of dihydroorotate to orotate with NAD(+) as electron acceptor. The sequence is that of Dihydroorotate dehydrogenase B (NAD(+)), catalytic subunit (pyrD) from Bacillus mycoides (strain KBAB4) (Bacillus weihenstephanensis).